We begin with the raw amino-acid sequence, 40 residues long: Photosystem II reaction center protein J (40 aa).

The helical transmembrane segment at 8–28 threads the bilayer; it reads IPLWIIGTVTGILVIGLIGIF.

This sequence belongs to the PsbJ family. PSII is composed of 1 copy each of membrane proteins PsbA, PsbB, PsbC, PsbD, PsbE, PsbF, PsbH, PsbI, PsbJ, PsbK, PsbL, PsbM, PsbT, PsbX, PsbY, PsbZ, Psb30/Ycf12, at least 3 peripheral proteins of the oxygen-evolving complex and a large number of cofactors. It forms dimeric complexes.

It is found in the plastid. The protein resides in the chloroplast thylakoid membrane. Its function is as follows. One of the components of the core complex of photosystem II (PSII). PSII is a light-driven water:plastoquinone oxidoreductase that uses light energy to abstract electrons from H(2)O, generating O(2) and a proton gradient subsequently used for ATP formation. It consists of a core antenna complex that captures photons, and an electron transfer chain that converts photonic excitation into a charge separation. In Eucalyptus globulus subsp. globulus (Tasmanian blue gum), this protein is Photosystem II reaction center protein J.